The following is a 2313-amino-acid chain: Voltage-dependent R-type calcium channel subunit alpha-1E (2313 aa).

Positions 1–38 (MARFGEAVVARPGSGDGDSDQSRNRQGTPVPASGQAAA) are disordered. Topologically, residues 1–89 (MARFGEAVVA…KYAKKLIDWP (89 aa)) are cytoplasmic. Phosphoserine is present on residues S14 and S19. Residues 76–354 (NIVRKYAKKL…LVLGVLSGEF (279 aa)) form an I repeat. Residues 90–108 (PFEYMILATIIANCIVLAL) form a helical membrane-spanning segment. The Extracellular portion of the chain corresponds to 109–127 (EQHLPEDDKTPMSRRLEKT). Residues 128–146 (EPYFIGIFCFEAGIKIVAL) traverse the membrane as a helical segment. Over 147-158 (GFIFHKGSYLRN) the chain is Cytoplasmic. The chain crosses the membrane as a helical span at residues 159 to 173 (GWNVMDFIVVLSGIL). Residues 174–185 (ATAGTHFNTHVD) lie on the Extracellular side of the membrane. A helical transmembrane segment spans residues 186–205 (LRTLRAVRVLRPLKLVSGIP). The Cytoplasmic portion of the chain corresponds to 206–223 (SLQIVLKSIMKAMVPLLQ). A helical transmembrane segment spans residues 224–244 (IGLLLFFAILMFAIIGLEFYS). Residues 245-326 (GKLHRACFMN…NTNDALGATW (82 aa)) are Extracellular-facing. N-linked (GlcNAc...) asparagine glycosylation is present at N254. Residues 327–350 (NWLYFIPLIIIGSFFVLNLVLGVL) traverse the membrane as a helical segment. Over 351-476 (SGEFAKERER…ISIRHMVKSQ (126 aa)) the chain is Cytoplasmic. Positions 374–391 (QQIERELNGYRAWIDKAE) are binding to the beta subunit. D426 lines the Ca(2+) pocket. Position 427 is a phosphoserine (S427). Ca(2+) is bound by residues S428, E430, and C432. T440 is modified (phosphothreonine). The stretch at 462–706 (ERLLRISIRH…VFLAIAVDNL (245 aa)) is one II repeat. The helical transmembrane segment at 477-496 (VFYWIVLSLVALNTACVAIV) threads the bilayer. Over 497–509 (HHNQPQWLTHLLY) the chain is Extracellular. The helical transmembrane segment at 510 to 529 (YAEFLFLGLFLLEMSLKMYG) threads the bilayer. At 530–538 (MGPRLYFHS) the chain is on the cytoplasmic side. The chain crosses the membrane as a helical span at residues 539-557 (SFNCFDFGVTVGSIFEVVW). Residues 558–567 (AIFRPGTSFG) lie on the Extracellular side of the membrane. Residues 568-586 (ISVLRALRLLRIFKITKYW) traverse the membrane as a helical segment. At 587 to 605 (ASLRNLVVSLMSSMKSIIS) the chain is on the cytoplasmic side. The helical transmembrane segment at 606-625 (LLFLLFLFIVVFALLGMQLF) threads the bilayer. Residues 626 to 678 (GGRFNFNDGTPSANFDTFPAAIMTVFQILTGEDWNEVMYNGIRSQGGVSSGMW) are Extracellular-facing. Residues 679–703 (SAIYFIVLTLFGNYTLLNVFLAIAV) form a helical membrane-spanning segment. The Cytoplasmic portion of the chain corresponds to 704-1148 (DNLANAQELT…TNPIRRACHY (445 aa)). A disordered region spans residues 729–774 (LQKAKEVSPMSAPNMPSIERDRRRRHHMSMWEPRSSHLRERRRRHH). S736, S745, S793, S815, and S855 each carry phosphoserine. The segment at 851–984 (SRGGSLKGDG…EERAQDLRRT (134 aa)) is disordered. The span at 866–875 (ALDNQRTPLS) shows a compositional bias: polar residues. Residues 913–926 (RHRQSQRRSRHRRV) show a composition bias toward basic residues. Low complexity predominate over residues 933–945 (SSSASRSRSASQE). S947 carries the phosphoserine modification. The segment covering 955 to 983 (EGEKDHELRGNHGAKEPTIQEERAQDLRR) has biased composition (basic and acidic residues). S1097 carries the phosphoserine modification. Residues 1103–1125 (EIREDEEEVEKKKQKKEKRETGK) are disordered. An III repeat occupies 1140 to 1426 (NPIRRACHYI…IFVALIIITF (287 aa)). Residues 1149–1165 (IVNLRYFEMCILLVIAA) form a helical membrane-spanning segment. The Extracellular segment spans residues 1166–1189 (SSIALAAEDPVLTNSERNKVLRYF). The chain crosses the membrane as a helical span at residues 1190-1209 (DYVFTGVFTFEMVIKMIDQG). The Cytoplasmic portion of the chain corresponds to 1210–1217 (LILQDGSY). The helical transmembrane segment at 1218-1240 (FRDLWNILDFVVVVGALVAFALA) threads the bilayer. The Extracellular segment spans residues 1241–1254 (NALGTNKGRDIKTI). Residues 1255–1272 (KSLRVLRVLRPLKTIKRL) form a helical membrane-spanning segment. Over 1273-1291 (PKLKAVFDCVVTSLKNVFN) the chain is Cytoplasmic. A helical transmembrane segment spans residues 1292–1311 (ILIVYKLFMFIFAVIAVQLF). Topologically, residues 1312–1398 (KGKFFYCTDS…RGPSRSNRME (87 aa)) are extracellular. A helical membrane pass occupies residues 1399–1422 (MSIFYVVYFVVFPFFFVNIFVALI). The Cytoplasmic portion of the chain corresponds to 1423-1479 (IITFQEQGDKMMEECSLEKNERACIDFAISAKPLTRYMPQNRHTFQYRVWHFVVSPS). The IV repeat unit spans residues 1463–1726 (NRHTFQYRVW…LFVAVIMDNF (264 aa)). The helical transmembrane segment at 1480 to 1498 (FEYTIMAMIALNTVVLMMK) threads the bilayer. Residues 1499 to 1513 (YYSAPCTYELALKYL) are Extracellular-facing. Residues 1514 to 1533 (NIAFTMVFSLECVLKVIAFG) traverse the membrane as a helical segment. The Cytoplasmic segment spans residues 1534–1541 (FLNYFRDT). Residues 1542–1560 (WNIFDFITVIGSITEIILT) form a helical membrane-spanning segment. Residues 1561 to 1571 (DSKLVNTSGFN) lie on the Extracellular side of the membrane. N-linked (GlcNAc...) asparagine glycosylation is found at N1566 and N1571. Residues 1572-1590 (MSFLKLFRAARLIKLLRQG) traverse the membrane as a helical segment. Topologically, residues 1591–1609 (YTIRILLWTFVQSFKALPY) are cytoplasmic. A helical membrane pass occupies residues 1610 to 1629 (VCLLIAMLFFIYAIIGMQVF). The Extracellular portion of the chain corresponds to 1630-1698 (GNIKLDEESH…NENERCGTDL (69 aa)). Residues 1699 to 1724 (AYVYFVSFIFFCSFLMLNLFVAVIMD) form a helical membrane-spanning segment. Residues 1725–2313 (NFEYLTRDSS…LSDTEEDDKC (589 aa)) are Cytoplasmic-facing. Residues 1739-1774 (HHLDEFVRVWAEYDRAACGRIHYTEMYEMLTLMSPP) form the EF-hand domain. 3 residues coordinate Ca(2+): D1752, R1758, and E1763. Disordered regions lie at residues 1970-2170 (VSEL…RPLL), 2206-2225 (CLTE…ASPQ), and 2263-2295 (SNTI…GPGM). A compositionally biased stretch (polar residues) spans 2012-2023 (TDPSSMRRSFST). Residues 2055–2064 (HSSLRLSAHR) are compositionally biased toward low complexity. A compositionally biased stretch (basic and acidic residues) spans 2065–2085 (LNSDSGHKSDTHRSGGRERGR). Residues S2094 and S2113 each carry the phosphoserine modification. Residues 2101–2118 (NSEERGTQADWESPERRQ) show a composition bias toward basic and acidic residues. Residues 2129-2152 (TPNRQGTGSLSESSIPSVSDTSTP) show a composition bias toward polar residues. Residues 2210–2225 (SSNSPHPQQSQHASPQ) are compositionally biased toward low complexity.

It belongs to the calcium channel alpha-1 subunit (TC 1.A.1.11) family. CACNA1E subfamily. As to quaternary structure, interacts with EFHC1. Voltage-dependent calcium channels are multisubunit complexes, consisting of alpha-1, alpha-2, beta and delta subunits in a 1:1:1:1 ratio. The channel activity is directed by the pore-forming and voltage-sensitive alpha-1 subunit. In many cases, this subunit is sufficient to generate voltage-sensitive calcium channel activity. The auxiliary subunits beta and alpha-2/delta linked by a disulfide bridge regulate the channel activity. As to expression, expressed in neuronal tissues and in kidney.

The protein localises to the membrane. The enzyme catalyses Ca(2+)(in) = Ca(2+)(out). In terms of biological role, voltage-sensitive calcium channels (VSCC) mediate the entry of calcium ions into excitable cells. They are also involved in a variety of calcium-dependent processes, including muscle contraction, hormone or neurotransmitter release, gene expression, cell motility, cell division and cell death. The isoform alpha-1E gives rise to R-type calcium currents. R-type calcium channels belong to the 'high-voltage activated' (HVA) group and are blocked by nickel. They are however insensitive to dihydropyridines (DHP). Calcium channels containing alpha-1E subunit could be involved in the modulation of firing patterns of neurons which is important for information processing. Voltage-sensitive calcium channels (VSCC) mediate the entry of calcium ions into excitable cells. They are also involved in a variety of calcium-dependent processes, including muscle contraction, hormone or neurotransmitter release, gene expression, cell motility, cell division and cell death. The isoform alpha-1E gives rise to R-type calcium currents. The protein is Voltage-dependent R-type calcium channel subunit alpha-1E (CACNA1E) of Homo sapiens (Human).